Here is an 89-residue protein sequence, read N- to C-terminus: Small ribosomal subunit protein uS15 (89 aa).

Residues 1 to 11 show a composition bias toward basic and acidic residues; sequence MSITAERKAEV. The segment at 1 to 25 is disordered; it reads MSITAERKAEVIKTNARKSGDTGSP.

This sequence belongs to the universal ribosomal protein uS15 family. As to quaternary structure, part of the 30S ribosomal subunit. Forms a bridge to the 50S subunit in the 70S ribosome, contacting the 23S rRNA.

Functionally, one of the primary rRNA binding proteins, it binds directly to 16S rRNA where it helps nucleate assembly of the platform of the 30S subunit by binding and bridging several RNA helices of the 16S rRNA. Forms an intersubunit bridge (bridge B4) with the 23S rRNA of the 50S subunit in the ribosome. The sequence is that of Small ribosomal subunit protein uS15 from Nitrobacter hamburgensis (strain DSM 10229 / NCIMB 13809 / X14).